The primary structure comprises 248 residues: Exosome complex component Rrp41 (248 aa).

This sequence belongs to the RNase PH family. Rrp41 subfamily. Component of the archaeal exosome complex. Forms a hexameric ring-like arrangement composed of 3 Rrp41-Rrp42 heterodimers. The hexameric ring associates with a trimer of Rrp4 and/or Csl4 subunits.

Its subcellular location is the cytoplasm. Catalytic component of the exosome, which is a complex involved in RNA degradation. Has 3'-&gt;5' exoribonuclease activity. Can also synthesize heteromeric RNA-tails. This chain is Exosome complex component Rrp41, found in Thermoplasma acidophilum (strain ATCC 25905 / DSM 1728 / JCM 9062 / NBRC 15155 / AMRC-C165).